We begin with the raw amino-acid sequence, 122 residues long: Fluoride-specific ion channel FluC (122 aa).

Transmembrane regions (helical) follow at residues 6 to 26, 33 to 53, 60 to 80, and 101 to 121; these read LVVG…INLV, SISF…GLLF, GLSP…FTTF, and LNII…FLIF. The Na(+) site is built by Gly-75 and Thr-78.

This sequence belongs to the fluoride channel Fluc/FEX (TC 1.A.43) family.

It is found in the cell inner membrane. It carries out the reaction fluoride(in) = fluoride(out). Its activity is regulated as follows. Na(+) is not transported, but it plays an essential structural role and its presence is essential for fluoride channel function. Fluoride-specific ion channel. Important for reducing fluoride concentration in the cell, thus reducing its toxicity. This chain is Fluoride-specific ion channel FluC, found in Campylobacter jejuni subsp. jejuni serotype O:2 (strain ATCC 700819 / NCTC 11168).